A 102-amino-acid chain; its full sequence is Plastocyanin (102 aa).

Positions 1–102 (AKVEVGDEVG…ANMKGTLTVK (102 aa)) constitute a Plastocyanin-like domain. Cu cation is bound by residues histidine 37, cysteine 87, histidine 90, and methionine 95.

The protein belongs to the plastocyanin family. It depends on Cu(2+) as a cofactor.

Its subcellular location is the plastid. The protein resides in the chloroplast thylakoid membrane. Functionally, participates in electron transfer between P700 and the cytochrome b6-f complex in photosystem I. The polypeptide is Plastocyanin (PETE) (Dryopteris crassirhizoma (Thick stemmed wood fern)).